A 166-amino-acid chain; its full sequence is MTAAVNDAPALDLEVQYVVAWRAGLPPEAAFRRWVSAALAAGGHTGPAALAVRVVDKAEGRRLNHDYRGRDYPTNVLSFPFEAPPGLDEPLPELGDLVICAPVVEREAREQGKPEADHWAHLVVHGVLHLLGYDHEAAEEAEAMEGLERRILAGLGIADPYRLDEQ.

Residues H125, H129, and H135 each contribute to the Zn(2+) site.

The protein belongs to the endoribonuclease YbeY family. Requires Zn(2+) as cofactor.

The protein resides in the cytoplasm. In terms of biological role, single strand-specific metallo-endoribonuclease involved in late-stage 70S ribosome quality control and in maturation of the 3' terminus of the 16S rRNA. This chain is Endoribonuclease YbeY, found in Alkalilimnicola ehrlichii (strain ATCC BAA-1101 / DSM 17681 / MLHE-1).